The sequence spans 111 residues: Transcription factor S (111 aa).

Residues C4, C7, C24, C27, C72, C75, C100, and C103 each contribute to the Zn(2+) site. A C4-type zinc finger spans residues 4–27 (CPKCGSMMMPRKENGKTVYKCSKC). The TFIIS-type zinc finger occupies 68 to 108 (RGISCPSCGNDEAYFWILQTRSADEPATRFYKCTKCGKVWR).

It belongs to the archaeal RpoM/eukaryotic RPA12/RPB9/RPC11 RNA polymerase family.

Functionally, induces RNA cleavage activity in the RNA polymerase. In its presence, the cleavage activity of the RNA polymerase truncates the RNA back to position +15 in a stepwise manner by releasing mainly dinucleotides from the 3'-end of the nascent RNA. The truncated RNAs are able to continue elongation. Involved in transcriptional proofreading and fidelity. Misincorporation of nucleotides during elongation of transcription leads to arrested elongation complexes which are rescued by TFS-promoted removal of a dinucleotide from the 3'-end. TFS is able to induce a cleavage resynthesis cycle in stalled elongation complexes (resulting from the next missing nucleotide or a reduced incorporation rate of a wrong nucleotide) preventing misincorporation and enabling proofreading in a post-incorporation manner. Pausing of elongation complexes is the main determinant of TFS-induced RNA cleavage. In Sulfolobus acidocaldarius (strain ATCC 33909 / DSM 639 / JCM 8929 / NBRC 15157 / NCIMB 11770), this protein is Transcription factor S.